The sequence spans 316 residues: Conjugated bile acid hydrolase (316 aa).

C2 (nucleophile) is an active-site residue. Residues C2 and R18 each coordinate deoxycholate. Residue N81 coordinates taurine.

It belongs to the peptidase C59 family.

The enzyme catalyses cholate + taurine = taurocholate + H2O. It carries out the reaction taurochenodeoxycholate + H2O = chenodeoxycholate + taurine. The catalysed reaction is taurodeoxycholate + H2O = deoxycholate + taurine. It catalyses the reaction glycocholate + H2O = cholate + glycine. The enzyme catalyses glycodeoxycholate + H2O = deoxycholate + glycine. It participates in lipid metabolism; bile acid biosynthesis. In terms of biological role, bile salt hydrolase that catalyzes the deconjugation of glycine- and taurine-linked bile salts, which occurs naturally in the intestines of humans, releasing amino acid residues and deconjugated bile salts (bile acids). Can hydrolyze the amide bond in the bile salts taurocholate (TCA), taurodeoxycholate (TDCA), taurochenodeoxycholate (TCDCA), glycocholate (GCA) and glycodeoxycholate (GDCA). Shows highest activity toward the taurine-conjugated bile salts TCA and TCDCA. The activity toward the other three substrates (TDCA, GCA and GDCA) is relatively low. This enzyme likely contributes to bile salt resistance of the strain and may be associated with survival capability of strain JCM1131 within the human intestine by bile detoxification. The polypeptide is Conjugated bile acid hydrolase (Lactobacillus gasseri (strain ATCC 33323 / DSM 20243 / BCRC 14619 / CIP 102991 / JCM 1131 / KCTC 3163 / NCIMB 11718 / NCTC 13722 / AM63)).